A 149-amino-acid chain; its full sequence is MKWIDLKRSKIKVYGKPVKMLMKGLTAPEEHTHFLHGLLTNDIKSLKPYTFNYNLWLKQNGQPIADFFVYKIKDYYILDTEEPADFVINEFNRLKLSLKVYFEDLTPNYKHVFIYGEGAEEFVKEKFGVELSDYEIKELKEELTLRKIL.

This is an uncharacterized protein from Aquifex aeolicus (strain VF5).